A 149-amino-acid chain; its full sequence is Large ribosomal subunit protein bL9 (149 aa).

Belongs to the bacterial ribosomal protein bL9 family.

Its function is as follows. Binds to the 23S rRNA. This chain is Large ribosomal subunit protein bL9, found in Anaeromyxobacter dehalogenans (strain 2CP-1 / ATCC BAA-258).